The following is an 801-amino-acid chain: U-box domain-containing protein 34 (801 aa).

The segment at 205-309 (RSPTLPDPRQ…PETSRKSKKV (105 aa)) is disordered. Residues 236–254 (LTCNKPKTPQSSKASSATT) are compositionally biased toward polar residues. Residues 289 to 309 (VSEHRDSDRSPPETSRKSKKV) are compositionally biased toward basic and acidic residues. Residues 301 to 395 (ETSRKSKKVE…ETAKALLARE (95 aa)) are a coiled coil. The region spanning 442–705 (FSPEKVIGEG…DLKSEVIPVL (264 aa)) is the Protein kinase domain. ATP is bound by residues 448–456 (IGEGGYGKV) and K469. Residue D564 is the Proton acceptor of the active site. Residues 724–797 (RAPSHYFCPI…RDWKSRVRFS (74 aa)) form the U-box domain.

The protein belongs to the protein kinase superfamily. Ser/Thr protein kinase family.

The catalysed reaction is L-seryl-[protein] + ATP = O-phospho-L-seryl-[protein] + ADP + H(+). It carries out the reaction L-threonyl-[protein] + ATP = O-phospho-L-threonyl-[protein] + ADP + H(+). It catalyses the reaction S-ubiquitinyl-[E2 ubiquitin-conjugating enzyme]-L-cysteine + [acceptor protein]-L-lysine = [E2 ubiquitin-conjugating enzyme]-L-cysteine + N(6)-ubiquitinyl-[acceptor protein]-L-lysine.. It participates in protein modification; protein ubiquitination. Its function is as follows. Functions as an E3 ubiquitin ligase. This is U-box domain-containing protein 34 (PUB34) from Arabidopsis thaliana (Mouse-ear cress).